The primary structure comprises 529 residues: Mitochondrial inner membrane magnesium transporter MIT1 (529 aa).

Coiled coils occupy residues 336–388 (KIQL…LKNE) and 416–450 (LLET…LNLD). A helical transmembrane segment spans residues 456-476 (FILLNAKISFSTLFCSICAVI). The Mitochondrial intermembrane portion of the chain corresponds to 477–492 (TSLFGMNLKNFIEHND). The helical transmembrane segment at 493–513 (YAFFIVSIFITSWSIVGIYFT) threads the bilayer. At 514–529 (KNINTLLRFFDKYNVK) the chain is on the mitochondrial matrix side.

It belongs to the CorA metal ion transporter (MIT) (TC 1.A.35) family.

It is found in the mitochondrion inner membrane. Mitochondrial inner membrane magnesium transporter required for mitochondrial magnesium homeostasis. Involved in the development of the sporozoite in the mosquito vector midgut. This Plasmodium falciparum (isolate 3D7) protein is Mitochondrial inner membrane magnesium transporter MIT1.